Here is a 191-residue protein sequence, read N- to C-terminus: Rho-related GTP-binding protein RhoG (191 aa).

10–17 (GDGAVGKT) contributes to the GTP binding site. The Effector region motif lies at 32 to 40 (YIPTVFDNY). Residues 57–61 (DTAGQ) and 115–118 (TKKD) contribute to the GTP site. Residues Thr-138 and Thr-180 each carry the phosphothreonine modification. Cys-188 carries the post-translational modification Cysteine methyl ester. Residue Cys-188 is the site of S-geranylgeranyl cysteine attachment. The propeptide at 189–191 (ILL) is removed in mature form.

Belongs to the small GTPase superfamily. Rho family. As to quaternary structure, interacts with ARHGEF26. Interacts with ARHGEF16. Interacts with UNC13D; the interaction increases RhoG affinity to the membrane lipids, targets UNC13D to membrane lipids and facilitates cytotoxic granule (CG) docking to the plasma membrane.

The protein localises to the cell membrane. Plays a role in immunological synaptic F-actin density and architecture organization. Regulates actin reorganization in lymphocytes, possibly through the modulation of Rac1 activity. Required for the formation of membrane ruffles during macropinocytosis. Plays a role in cell migration and is required for the formation of cup-like structures during trans-endothelial migration of leukocytes. Binds phospholipids in an activation-dependent manner; thereby acting as an anchor for other proteins to the plasma membrane (PM). Plays a role in exocytosis of cytotoxic granules (CG) by lymphocytes/Component of the exocytosis machinery in natural killer (NK) and CD8+ T cells. Promotes the docking of cytotoxic granules (CG) to the plasma membrane through the interaction with UNC13D. Involved in the cytotoxic activity of lymphocytes/primary CD8+ T cells. The polypeptide is Rho-related GTP-binding protein RhoG (RHOG) (Cricetus cricetus (Black-bellied hamster)).